Reading from the N-terminus, the 991-residue chain is Translation initiation factor IF-2 (991 aa).

Disordered regions lie at residues Glu-58–Arg-82 and Gln-106–Gln-405. Residues Gln-106–Pro-164 are compositionally biased toward low complexity. The segment covering Ser-165–Ala-175 has biased composition (pro residues). 3 stretches are compositionally biased toward low complexity: residues Ala-190–Glu-206, Ala-221–Pro-258, and Ala-267–Val-276. The span at Ala-279–Glu-289 shows a compositional bias: basic and acidic residues. Positions Arg-379–Gly-388 are enriched in gly residues. Positions Gln-395–Gln-405 are enriched in basic and acidic residues. The tr-type G domain maps to Pro-492–Glu-659. Residues Gly-501–Thr-508 are G1. Gly-501 to Thr-508 contacts GTP. Residues Gly-526 to His-530 are G2. The tract at residues Asp-547–Gly-550 is G3. Residues Asp-547 to His-551 and Asn-601 to Asp-604 contribute to the GTP site. The tract at residues Asn-601–Asp-604 is G4. A G5 region spans residues Ser-637–Lys-639.

The protein belongs to the TRAFAC class translation factor GTPase superfamily. Classic translation factor GTPase family. IF-2 subfamily.

The protein resides in the cytoplasm. In terms of biological role, one of the essential components for the initiation of protein synthesis. Protects formylmethionyl-tRNA from spontaneous hydrolysis and promotes its binding to the 30S ribosomal subunits. Also involved in the hydrolysis of GTP during the formation of the 70S ribosomal complex. The chain is Translation initiation factor IF-2 from Bordetella petrii (strain ATCC BAA-461 / DSM 12804 / CCUG 43448).